The sequence spans 162 residues: Peptide deformylase (162 aa).

Residues Cys-91 and His-133 each contribute to the Fe cation site. Glu-134 is a catalytic residue. His-137 contributes to the Fe cation binding site.

This sequence belongs to the polypeptide deformylase family. Requires Fe(2+) as cofactor.

It catalyses the reaction N-terminal N-formyl-L-methionyl-[peptide] + H2O = N-terminal L-methionyl-[peptide] + formate. In terms of biological role, removes the formyl group from the N-terminal Met of newly synthesized proteins. Requires at least a dipeptide for an efficient rate of reaction. N-terminal L-methionine is a prerequisite for activity but the enzyme has broad specificity at other positions. This Finegoldia magna (strain ATCC 29328 / DSM 20472 / WAL 2508) (Peptostreptococcus magnus) protein is Peptide deformylase.